A 271-amino-acid polypeptide reads, in one-letter code: Methyltransferase psoC (271 aa).

Belongs to the methyltransferase superfamily. LaeA methyltransferase family.

Its pathway is secondary metabolite biosynthesis. Its function is as follows. Methyltransferase; part of the gene cluster that mediates the biosynthesis of pseurotin A, a competitive inhibitor of chitin synthase and an inducer of nerve-cell proliferation. The PKS-NRPS hybrid synthetase psoA is responsible for the biosynthesis of azaspirene, one of the first intermediates having the 1-oxa-7-azaspiro[4,4]-non-2-ene-4,6-dione core of pseurotin, via condensation of one acetyl-CoA, 4 malonyl-CoA, and a L-phenylalanine molecule. The dual-functional monooxygenase/methyltransferase psoF seems to be involved in the addition of the C3 methyl group onto the pseurotin scaffold. Azaspirene is then converted to synerazol through 4 steps including oxidation of C17 by the cytochrome P450 monooxygenase psoD, O-methylation of the hydroxy group of C8 by the methyltransferase psoC, and the trans-to-cis isomerization of the C13 olefin by the glutathione S-transferase psoE. The fourth step of synerazol production is performed by the dual-functional monooxygenase/methyltransferase psoF which seems to catalyze the epoxidation of the intermediate deepoxy-synerazol. Synerazol can be attacked by a water molecule nonenzymatically at two different positions to yield two diol products, pseurotin A and pseurotin D. The protein is Methyltransferase psoC of Aspergillus fumigatus (strain ATCC MYA-4609 / CBS 101355 / FGSC A1100 / Af293) (Neosartorya fumigata).